Consider the following 331-residue polypeptide: Polysaccharide lyase (331 aa).

The signal sequence occupies residues 1–22; the sequence is MSLPLRLALLPTLLASASAFAA. The N-palmitoyl cysteine moiety is linked to residue Cys23. Cys23 is lipidated: S-diacylglycerol cysteine.

Belongs to the polysaccharide lyase 5 family.

It is found in the cell outer membrane. It carries out the reaction Eliminative cleavage of alginate to give oligosaccharides with 4-deoxy-alpha-L-erythro-hex-4-enuronosyl groups at their non-reducing ends and beta-D-mannuronate at their reducing end.. It catalyses the reaction [hyaluronan](n) = n 3-(4-deoxy-beta-D-gluc-4-enuronosyl)-N-acetyl-D-glucosamine + H2O. The enzyme catalyses Eliminative cleavage of (1-&gt;4)-beta-D-glucuronans to give oligosaccharides with 4-deoxy-beta-D-gluc-4-enuronosyl groups at their non-reducing ends. Complete degradation of glucuronans results in the formation of tetrasaccharides.. Its activity is regulated as follows. Is inhibited by mono- and divalent cations as well as L-ascorbic acid 6-hexadecanoate. In terms of biological role, polysaccharide lyase that catalyzes the depolymerization of several anionic polysaccharides via a beta-elimination mechanism. Exhibits broad substrate specificity, catalyzing the degradation of not only alginate and poly-beta-D-mannuronate (poly-ManA), but poly-beta-D-glucuronate (poly-GlcA or poly-GlcUA) and hyaluronate (HA) as well. The oligosaccharide products formed by enzymatic cleavage are comprised mainly of disaccharides, with a lower abundance of trimers and pentamers. Is not active on poly-D-galacturonate, heparin and heparin sulfate. The chain is Polysaccharide lyase from Stenotrophomonas maltophilia (strain K279a).